A 209-amino-acid polypeptide reads, in one-letter code: uncharacterized protein (209 aa).

The MPN domain occupies 1 to 67; the sequence is MEILPKYKPE…LIMYNYWTID (67 aa). Zn(2+)-binding residues include histidine 17, histidine 19, and aspartate 30. Positions 17 to 30 match the JAMM motif motif; it reads HTHPKGPAEPSIND.

This is an uncharacterized protein from Acidianus convivator (ATV).